The sequence spans 334 residues: Glyceraldehyde-3-phosphate dehydrogenase (334 aa).

NAD(+) contacts are provided by residues 12–13 (TI) and Gly111. 140–142 (SCN) contributes to the D-glyceraldehyde 3-phosphate binding site. The active-site Nucleophile is Cys141. Position 167 (Arg167) interacts with NAD(+). Position 192-193 (192-193 (HG)) interacts with D-glyceraldehyde 3-phosphate. Gln298 is an NAD(+) binding site.

Belongs to the glyceraldehyde-3-phosphate dehydrogenase family. In terms of assembly, homotetramer.

Its subcellular location is the encapsulin nanocompartment. The catalysed reaction is D-glyceraldehyde 3-phosphate + phosphate + NADP(+) = (2R)-3-phospho-glyceroyl phosphate + NADPH + H(+). It carries out the reaction D-glyceraldehyde 3-phosphate + phosphate + NAD(+) = (2R)-3-phospho-glyceroyl phosphate + NADH + H(+). It participates in carbohydrate degradation; glycolysis; pyruvate from D-glyceraldehyde 3-phosphate: step 1/5. Its function is as follows. Possible cargo protein of a type 4B encapsulin nanocompartment. Active in the presence of NAD and NADP, prefers NADP. This Pyrococcus furiosus (strain ATCC 43587 / DSM 3638 / JCM 8422 / Vc1) protein is Glyceraldehyde-3-phosphate dehydrogenase (gap).